We begin with the raw amino-acid sequence, 336 residues long: Ketol-acid reductoisomerase (NADP(+)) (336 aa).

A KARI N-terminal Rossmann domain is found at 1-182 (MAVIYYDKDA…GVTRAGVIET (182 aa)). Residues 25–28 (YGSQ), Arg-48, Ser-51, Ser-53, and 83–86 (DEHQ) each bind NADP(+). His-108 is a catalytic residue. Gly-134 serves as a coordination point for NADP(+). Residues 183-328 (TFKEETETDL…KELRKMMPWL (146 aa)) form the KARI C-terminal knotted domain. 4 residues coordinate Mg(2+): Asp-191, Glu-195, Glu-227, and Glu-231. Ser-252 contributes to the substrate binding site.

Belongs to the ketol-acid reductoisomerase family. Mg(2+) is required as a cofactor.

It catalyses the reaction (2R)-2,3-dihydroxy-3-methylbutanoate + NADP(+) = (2S)-2-acetolactate + NADPH + H(+). The enzyme catalyses (2R,3R)-2,3-dihydroxy-3-methylpentanoate + NADP(+) = (S)-2-ethyl-2-hydroxy-3-oxobutanoate + NADPH + H(+). It participates in amino-acid biosynthesis; L-isoleucine biosynthesis; L-isoleucine from 2-oxobutanoate: step 2/4. The protein operates within amino-acid biosynthesis; L-valine biosynthesis; L-valine from pyruvate: step 2/4. In terms of biological role, involved in the biosynthesis of branched-chain amino acids (BCAA). Catalyzes an alkyl-migration followed by a ketol-acid reduction of (S)-2-acetolactate (S2AL) to yield (R)-2,3-dihydroxy-isovalerate. In the isomerase reaction, S2AL is rearranged via a Mg-dependent methyl migration to produce 3-hydroxy-3-methyl-2-ketobutyrate (HMKB). In the reductase reaction, this 2-ketoacid undergoes a metal-dependent reduction by NADPH to yield (R)-2,3-dihydroxy-isovalerate. This is Ketol-acid reductoisomerase (NADP(+)) from Thermotoga maritima (strain ATCC 43589 / DSM 3109 / JCM 10099 / NBRC 100826 / MSB8).